Reading from the N-terminus, the 215-residue chain is ATP-dependent dethiobiotin synthetase BioD (215 aa).

13–18 (DIGKTI) contacts ATP. Thr17 lines the Mg(2+) pocket. Lys38 is a catalytic residue. Residue Thr42 participates in substrate binding. ATP is bound by residues Asp50, 115–118 (EGAG), and 175–176 (NH). 2 residues coordinate Mg(2+): Asp50 and Glu115.

This sequence belongs to the dethiobiotin synthetase family. In terms of assembly, homodimer. The cofactor is Mg(2+).

Its subcellular location is the cytoplasm. The catalysed reaction is (7R,8S)-7,8-diammoniononanoate + CO2 + ATP = (4R,5S)-dethiobiotin + ADP + phosphate + 3 H(+). It functions in the pathway cofactor biosynthesis; biotin biosynthesis; biotin from 7,8-diaminononanoate: step 1/2. Catalyzes a mechanistically unusual reaction, the ATP-dependent insertion of CO2 between the N7 and N8 nitrogen atoms of 7,8-diaminopelargonic acid (DAPA, also called 7,8-diammoniononanoate) to form a ureido ring. This Neisseria meningitidis serogroup A / serotype 4A (strain DSM 15465 / Z2491) protein is ATP-dependent dethiobiotin synthetase BioD.